Consider the following 448-residue polypeptide: Exodeoxyribonuclease 7 large subunit (448 aa).

The protein belongs to the XseA family. In terms of assembly, heterooligomer composed of large and small subunits.

It localises to the cytoplasm. It carries out the reaction Exonucleolytic cleavage in either 5'- to 3'- or 3'- to 5'-direction to yield nucleoside 5'-phosphates.. In terms of biological role, bidirectionally degrades single-stranded DNA into large acid-insoluble oligonucleotides, which are then degraded further into small acid-soluble oligonucleotides. This chain is Exodeoxyribonuclease 7 large subunit, found in Photobacterium profundum (strain SS9).